The sequence spans 621 residues: Zinc metalloproteinase-disintegrin-like NaMP (621 aa).

Positions 1–20 (MIQPLLVAICLVVFPYQGSS) are cleaved as a signal peptide. The propeptide occupies 21–188 (TILESGKVRD…GESDETIKKI (168 aa)). The 197-residue stretch at 206 to 402 (KHIELYMVAD…KSAQCILNDP (197 aa)) folds into the Peptidase M12B domain. N-linked (GlcNAc...) asparagine glycosylation is found at Asn-225, Asn-268, and Asn-319. Cystine bridges form between Cys-317-Cys-397, Cys-357-Cys-381, Cys-359-Cys-364, Cys-413-Cys-442, Cys-424-Cys-437, Cys-426-Cys-432, Cys-436-Cys-459, Cys-450-Cys-456, Cys-455-Cys-481, Cys-468-Cys-488, Cys-475-Cys-507, Cys-500-Cys-512, Cys-519-Cys-569, Cys-534-Cys-579, Cys-547-Cys-557, Cys-564-Cys-605, and Cys-599-Cys-610. A Zn(2+)-binding site is contributed by His-342. Glu-343 is a catalytic residue. Residues His-346 and His-352 each coordinate Zn(2+). The region spanning 410–496 (TAICGNGFVE…ECPMNHFHMN (87 aa)) is the Disintegrin domain. The D/ECD-tripeptide signature appears at 474 to 476 (DCD). An N-linked (GlcNAc...) asparagine glycan is attached at Asn-551.

Belongs to the venom metalloproteinase (M12B) family. P-III subfamily. P-IIIa sub-subfamily. In terms of assembly, monomer. The cofactor is Zn(2+). Expressed by the venom gland.

It localises to the secreted. Snake venom zinc metalloproteinase that inhibits platelet aggregation and degrades fibrinogen. The protein is Zinc metalloproteinase-disintegrin-like NaMP of Naja atra (Chinese cobra).